We begin with the raw amino-acid sequence, 612 residues long: Dihydroxy-acid dehydratase (612 aa).

A Mg(2+)-binding site is contributed by aspartate 81. Residue cysteine 122 participates in [2Fe-2S] cluster binding. Residues aspartate 123 and lysine 124 each coordinate Mg(2+). At lysine 124 the chain carries N6-carboxylysine. Residue cysteine 195 participates in [2Fe-2S] cluster binding. Glutamate 491 serves as a coordination point for Mg(2+). The active-site Proton acceptor is the serine 517.

This sequence belongs to the IlvD/Edd family. In terms of assembly, homodimer. [2Fe-2S] cluster is required as a cofactor. Mg(2+) serves as cofactor.

It carries out the reaction (2R)-2,3-dihydroxy-3-methylbutanoate = 3-methyl-2-oxobutanoate + H2O. The enzyme catalyses (2R,3R)-2,3-dihydroxy-3-methylpentanoate = (S)-3-methyl-2-oxopentanoate + H2O. Its pathway is amino-acid biosynthesis; L-isoleucine biosynthesis; L-isoleucine from 2-oxobutanoate: step 3/4. It functions in the pathway amino-acid biosynthesis; L-valine biosynthesis; L-valine from pyruvate: step 3/4. In terms of biological role, functions in the biosynthesis of branched-chain amino acids. Catalyzes the dehydration of (2R,3R)-2,3-dihydroxy-3-methylpentanoate (2,3-dihydroxy-3-methylvalerate) into 2-oxo-3-methylpentanoate (2-oxo-3-methylvalerate) and of (2R)-2,3-dihydroxy-3-methylbutanoate (2,3-dihydroxyisovalerate) into 2-oxo-3-methylbutanoate (2-oxoisovalerate), the penultimate precursor to L-isoleucine and L-valine, respectively. The polypeptide is Dihydroxy-acid dehydratase (Rhizobium johnstonii (strain DSM 114642 / LMG 32736 / 3841) (Rhizobium leguminosarum bv. viciae)).